Here is a 261-residue protein sequence, read N- to C-terminus: Cytochrome c oxidase subunit 3 (261 aa).

The Mitochondrial matrix portion of the chain corresponds to 1-15 (MTHQTHAYHMVNPSP). A helical transmembrane segment spans residues 16-34 (WPLTGALSALLMSSGLTMW). The Mitochondrial intermembrane portion of the chain corresponds to 35-40 (FHFNSL). The chain crosses the membrane as a helical span at residues 41 to 66 (ILLTTGLVTNILTMYQWWRDVIREST). At 67-72 (FQGHHT) the chain is on the mitochondrial matrix side. Residues 73 to 105 (PVVQKGLRYGMVLFIISEVLFFTGFFWAFYHSS) traverse the membrane as a helical segment. The Mitochondrial intermembrane segment spans residues 106–128 (LAPTPELGGCWPPTGINPLNPLE). A helical membrane pass occupies residues 129 to 152 (VPLLNTSVLLASGVSITWAHHSLM). The Mitochondrial matrix portion of the chain corresponds to 153 to 155 (EGN). A helical membrane pass occupies residues 156–183 (RKQMLQALFITIALGVYFTLLQASEYHE). At 184 to 190 (ASFTISD) the chain is on the mitochondrial intermembrane side. The chain crosses the membrane as a helical span at residues 191-223 (GVYGSTFFVATGFHGLHVIIGSTFLIVCFLRQL). At 224–232 (KFHFTSDHH) the chain is on the mitochondrial matrix side. A helical membrane pass occupies residues 233 to 256 (FGFEAAAWYWHFVDVVWLFLYVSI). Topologically, residues 257 to 261 (YWWGS) are mitochondrial intermembrane.

Belongs to the cytochrome c oxidase subunit 3 family. In terms of assembly, component of the cytochrome c oxidase (complex IV, CIV), a multisubunit enzyme composed of 14 subunits. The complex is composed of a catalytic core of 3 subunits MT-CO1, MT-CO2 and MT-CO3, encoded in the mitochondrial DNA, and 11 supernumerary subunits COX4I, COX5A, COX5B, COX6A, COX6B, COX6C, COX7A, COX7B, COX7C, COX8 and NDUFA4, which are encoded in the nuclear genome. The complex exists as a monomer or a dimer and forms supercomplexes (SCs) in the inner mitochondrial membrane with NADH-ubiquinone oxidoreductase (complex I, CI) and ubiquinol-cytochrome c oxidoreductase (cytochrome b-c1 complex, complex III, CIII), resulting in different assemblies (supercomplex SCI(1)III(2)IV(1) and megacomplex MCI(2)III(2)IV(2)).

It is found in the mitochondrion inner membrane. It catalyses the reaction 4 Fe(II)-[cytochrome c] + O2 + 8 H(+)(in) = 4 Fe(III)-[cytochrome c] + 2 H2O + 4 H(+)(out). Functionally, component of the cytochrome c oxidase, the last enzyme in the mitochondrial electron transport chain which drives oxidative phosphorylation. The respiratory chain contains 3 multisubunit complexes succinate dehydrogenase (complex II, CII), ubiquinol-cytochrome c oxidoreductase (cytochrome b-c1 complex, complex III, CIII) and cytochrome c oxidase (complex IV, CIV), that cooperate to transfer electrons derived from NADH and succinate to molecular oxygen, creating an electrochemical gradient over the inner membrane that drives transmembrane transport and the ATP synthase. Cytochrome c oxidase is the component of the respiratory chain that catalyzes the reduction of oxygen to water. Electrons originating from reduced cytochrome c in the intermembrane space (IMS) are transferred via the dinuclear copper A center (CU(A)) of subunit 2 and heme A of subunit 1 to the active site in subunit 1, a binuclear center (BNC) formed by heme A3 and copper B (CU(B)). The BNC reduces molecular oxygen to 2 water molecules using 4 electrons from cytochrome c in the IMS and 4 protons from the mitochondrial matrix. The protein is Cytochrome c oxidase subunit 3 (MT-CO3) of Hippopotamus amphibius (Hippopotamus).